The sequence spans 210 residues: Na(+)-translocating NADH-quinone reductase subunit D (210 aa).

5 helical membrane-spanning segments follow: residues 42 to 62 (FVMTLAVTFVTALSNFSVSLI), 72 to 92 (IIVQMAIIASLVIVVDQVLKA), 103 to 123 (VFVGLIITNCIVMGRAEAFAM), 131 to 151 (LIDGIGNGLGYGFVLITVGFF), and 178 to 198 (NGLMLLAPSAFFLIGFLIWVI).

This sequence belongs to the NqrDE/RnfAE family. As to quaternary structure, composed of six subunits; NqrA, NqrB, NqrC, NqrD, NqrE and NqrF.

The protein localises to the cell inner membrane. It carries out the reaction a ubiquinone + n Na(+)(in) + NADH + H(+) = a ubiquinol + n Na(+)(out) + NAD(+). Its function is as follows. NQR complex catalyzes the reduction of ubiquinone-1 to ubiquinol by two successive reactions, coupled with the transport of Na(+) ions from the cytoplasm to the periplasm. NqrA to NqrE are probably involved in the second step, the conversion of ubisemiquinone to ubiquinol. The chain is Na(+)-translocating NADH-quinone reductase subunit D from Vibrio campbellii (strain ATCC BAA-1116).